A 235-amino-acid chain; its full sequence is Meiotically up-regulated gene 123 protein (235 aa).

The segment covering 1–14 (MERLATRSSHDDPY) has biased composition (basic and acidic residues). 3 disordered regions span residues 1 to 34 (MERLATRSSHDDPYSRSSLPTSNAINSNHESNGS), 58 to 83 (PLHSSPSIKSSSQNGKSSSKGLGGMR), and 169 to 235 (SRAD…FDSD). Over residues 15 to 34 (SRSSLPTSNAINSNHESNGS) the composition is skewed to polar residues. The span at 61–77 (SSPSIKSSSQNGKSSSK) shows a compositional bias: low complexity. Residues 176-202 (ETTQSDGFESRSGSPTHDIQSYLVNRR) are compositionally biased toward polar residues. 3 positions are modified to phosphoserine: Ser180, Ser187, and Ser189. Residue Thr191 is modified to Phosphothreonine.

Its subcellular location is the cytoplasm. It localises to the nucleus. Involved in sporulation and has a role in meiosis. The sequence is that of Meiotically up-regulated gene 123 protein (mug123) from Schizosaccharomyces pombe (strain 972 / ATCC 24843) (Fission yeast).